We begin with the raw amino-acid sequence, 414 residues long: Eukaryotic initiation factor 4A-3 (414 aa).

Residues Glu41–Gln69 carry the Q motif motif. The Helicase ATP-binding domain occupies Ile72 to Ile242. Ala85–Thr92 is an ATP binding site. Positions Asp190 to Asp193 match the DEAD box motif. The Helicase C-terminal domain occupies Gly253–Leu414.

It belongs to the DEAD box helicase family. eIF4A subfamily. EIF4F is a multi-subunit complex, the composition of which varies with external and internal environmental conditions. It is composed of at least EIF4A, EIF4E and EIF4G. Interacts with DRM2 (via UBA domains).

The protein localises to the cytoplasm. The protein resides in the nucleus. The catalysed reaction is ATP + H2O = ADP + phosphate + H(+). ATP-dependent RNA helicase which is a subunit of the eIF4F complex involved in cap recognition and is required for mRNA binding to ribosome. In the current model of translation initiation, eIF4A unwinds RNA secondary structures in the 5'-UTR of mRNAs which is necessary to allow efficient binding of the small ribosomal subunit, and subsequent scanning for the initiator codon. The sequence is that of Eukaryotic initiation factor 4A-3 from Oryza sativa subsp. japonica (Rice).